The primary structure comprises 156 residues: MLLPDWKIRKEILIEPFSEESLQPAGYDLRVGREAFVKGKLIDVEKEGKVVIPPREYALILTLERIKLPDDVMGDMKIRSSLAREGVIGSFAWVDPGWDGNLTLMLYNASNEPVELRYGERFVQIAFIRLEGPARNPYRGNYQGSTRLAFSKRKKL.

Residues arginine 79–arginine 84, aspartate 95, glutamine 124, and tyrosine 138 each bind dCTP.

Belongs to the dCTP deaminase family. Homotrimer.

It carries out the reaction dCTP + H2O + H(+) = dUTP + NH4(+). It functions in the pathway pyrimidine metabolism; dUMP biosynthesis; dUMP from dCTP (dUTP route): step 1/2. Catalyzes the deamination of dCTP to dUTP. The chain is dCTP deaminase from Pyrococcus furiosus (strain ATCC 43587 / DSM 3638 / JCM 8422 / Vc1).